The primary structure comprises 320 residues: Cell division protein FtsQ (320 aa).

The segment at 1–24 (MAQTIKRGGKGVRRATAARSAQRK) is disordered. Residues 1 to 52 (MAQTIKRGGKGVRRATAARSAQRKVQTARQQTGSVLDSVLRWLPFSEETLHR) are Cytoplasmic-facing. A helical transmembrane segment spans residues 53 to 73 (ILMTLILAAAAGLVWTVAVMA). The Periplasmic portion of the chain corresponds to 74–320 (GIPALVSEQA…RAASAKSDEG (247 aa)). The POTRA domain maps to 92–160 (FKVSHLEVRG…DTLVIDIVER (69 aa)). The interval 296–320 (AAEKRAEEQARAEAKRAASAKSDEG) is disordered.

This sequence belongs to the FtsQ/DivIB family. FtsQ subfamily.

The protein localises to the cell inner membrane. In terms of biological role, essential cell division protein. This chain is Cell division protein FtsQ, found in Novosphingobium aromaticivorans (strain ATCC 700278 / DSM 12444 / CCUG 56034 / CIP 105152 / NBRC 16084 / F199).